Reading from the N-terminus, the 355-residue chain is tRNA pseudouridine synthase D (355 aa).

The Nucleophile role is filled by aspartate 84. The region spanning 160 to 306 (GVPNYFGLQR…MAHERRILRL (147 aa)) is the TRUD domain.

Belongs to the pseudouridine synthase TruD family.

It catalyses the reaction uridine(13) in tRNA = pseudouridine(13) in tRNA. Its function is as follows. Responsible for synthesis of pseudouridine from uracil-13 in transfer RNAs. In Pseudomonas aeruginosa (strain UCBPP-PA14), this protein is tRNA pseudouridine synthase D.